A 29-amino-acid polypeptide reads, in one-letter code: Protein YldA (29 aa).

Residues Phe5–Leu25 form a helical membrane-spanning segment.

It localises to the cell inner membrane. The polypeptide is Protein YldA (Escherichia coli (strain K12)).